We begin with the raw amino-acid sequence, 700 residues long: Elongation factor G (700 aa).

A tr-type G domain is found at 10–286 (TKVRNIGIMA…AVIDYLPNPL (277 aa)). GTP-binding positions include 19–26 (AHIDAGKT), 83–87 (DTPGH), and 137–140 (NKMD).

It belongs to the TRAFAC class translation factor GTPase superfamily. Classic translation factor GTPase family. EF-G/EF-2 subfamily.

It localises to the cytoplasm. Its function is as follows. Catalyzes the GTP-dependent ribosomal translocation step during translation elongation. During this step, the ribosome changes from the pre-translocational (PRE) to the post-translocational (POST) state as the newly formed A-site-bound peptidyl-tRNA and P-site-bound deacylated tRNA move to the P and E sites, respectively. Catalyzes the coordinated movement of the two tRNA molecules, the mRNA and conformational changes in the ribosome. This is Elongation factor G from Mycolicibacterium vanbaalenii (strain DSM 7251 / JCM 13017 / BCRC 16820 / KCTC 9966 / NRRL B-24157 / PYR-1) (Mycobacterium vanbaalenii).